Reading from the N-terminus, the 61-residue chain is Small ribosomal subunit protein uS14 (61 aa).

The Zn(2+) site is built by Cys-24, Cys-27, Cys-40, and Cys-43.

Belongs to the universal ribosomal protein uS14 family. Zinc-binding uS14 subfamily. As to quaternary structure, part of the 30S ribosomal subunit. Contacts proteins S3 and S10. It depends on Zn(2+) as a cofactor.

Its function is as follows. Binds 16S rRNA, required for the assembly of 30S particles and may also be responsible for determining the conformation of the 16S rRNA at the A site. The protein is Small ribosomal subunit protein uS14 of Dictyoglomus thermophilum (strain ATCC 35947 / DSM 3960 / H-6-12).